The sequence spans 306 residues: Deoxyribokinase (306 aa).

Substrate is bound by residues 10–12, 38–42, and glutamate 139; these read MVD and GKGAN. ATP contacts are provided by residues asparagine 184 and 220–225; that span reads TMGEKG. 2 residues coordinate K(+): aspartate 246 and serine 248. An ATP-binding site is contributed by 251–252; the sequence is GD. Aspartate 252 lines the substrate pocket. Aspartate 252 functions as the Proton acceptor in the catalytic mechanism. K(+) is bound by residues serine 282, glycine 285, glycine 287, and serine 291.

It belongs to the carbohydrate kinase PfkB family. Deoxyribokinase subfamily. As to quaternary structure, homodimer. Requires Mg(2+) as cofactor.

It is found in the cytoplasm. It carries out the reaction 2-deoxy-D-ribose + ATP = 2-deoxy-D-ribose 5-phosphate + ADP + H(+). Catalyzes the ATP-dependent phosphorylation of 2-deoxy-D-ribose to 2-deoxy-D-ribose 5-phosphate (dRib-5P), allowing the use of deoxyribose as the sole carbon source. Can also use D-ribose, with much lower efficiency. The sequence is that of Deoxyribokinase from Salmonella typhi.